Reading from the N-terminus, the 497-residue chain is Pseudooxynicotine dehydrogenase (497 aa).

The tat-type signal signal peptide spans 1–43; that stretch reads MANDKGDISKDGVSRRKFLGGAVIGAAAAAGVGSQILSLSATA. Ala70, Glu89, Arg97, Trp114, Val286, Ser462, and Ile472 together coordinate FAD.

It belongs to the flavin monoamine oxidase family. In terms of assembly, homodimer. FAD is required as a cofactor. Post-translationally, predicted to be exported by the Tat system. The position of the signal peptide cleavage has not been experimentally proven.

The protein localises to the periplasm. It catalyses the reaction pseudooxynicotine + 2 Fe(III)-[cytochrome c] + H2O = 4-oxo-4-(pyridin-3-yl)butanal + methylamine + 2 Fe(II)-[cytochrome c] + 2 H(+). Its pathway is alkaloid degradation; nicotine degradation. Strongly inhibited by Ag(+), Co(2+), Cu(2+) and Hg(2+). Involved in nicotine degradation. Catalyzes the deamination of pseudooxynicotine to 3-succinoylsemialdehyde-pyridine. The polypeptide is Pseudooxynicotine dehydrogenase (Pseudomonas sp).